The sequence spans 1061 residues: Chimeric ERCC6-PGBD3 protein (1061 aa).

Residues 1 to 39 (MPNEGIPHSSQTQEQDCLQSQPVSNNEEMAIKQESGGDG) are disordered. Polar residues predominate over residues 8–27 (HSSQTQEQDCLQSQPVSNNE). Phosphoserine is present on serine 158. Lysine 255 participates in a covalent cross-link: Glycyl lysine isopeptide (Lys-Gly) (interchain with G-Cter in SUMO2). 4 disordered regions span residues 287 to 323 (KQGCNKRAARKAPAPVTPPAPVQNKNKPNKKARVLSK), 344 to 466 (GKVG…QRLS), 494 to 521 (VIQPPENATAPVSDEESGDEEGGTINNL), and 537 to 573 (SDAESDSDDPSYAPKDDSPDEVPSTFTVQQPPPSRRR). The span at 353–363 (RPWESDMRPEA) shows a compositional bias: basic and acidic residues. Positions 364-392 (EGDSEGEESEYFPTEEEEEEEDDEVEGAE) are enriched in acidic residues. Residues serine 429 and serine 430 each carry the phosphoserine modification. Residues 451–462 (RYRDDGDEDYYK) show a composition bias toward basic and acidic residues. Acidic residues predominate over residues 506 to 515 (SDEESGDEEG). Serine 554 is modified (phosphoserine).

As to expression, expressed in heart and oocytes, but not in granulosa cells (at protein level).

It localises to the nucleus. Involved in repair of DNA damage following UV irradiation, acting either in the absence of ERCC6 or synergistically with ERCC6. Involved in the regulation of gene expression. In the absence of ERCC6, induces the expression of genes characteristic of interferon-like antiviral responses. This response is almost completely suppressed in the presence of ERCC6. In the presence of ERCC6, regulates the expression of genes involved in metabolism regulation, including IGFBP5 and IGFBP7. In vitro binds to PGBD3-related transposable elements, called MER85s; these non-autonomous 140 bp elements are characterized by the presence of PGBD3 terminal inverted repeats and the absence of internal transposase ORF. This is Chimeric ERCC6-PGBD3 protein from Homo sapiens (Human).